A 1578-amino-acid polypeptide reads, in one-letter code: Bromodomain-containing protein DDB_G0270170 (1578 aa).

A compositionally biased stretch (acidic residues) spans 1-12; that stretch reads MSLEQQDETVVE. Disordered regions lie at residues 1–39, 108–127, 151–285, and 319–454; these read MSLEQQDETVVEEETKTSFETNNSTANNTNNNTDNTYKE, NNNNGDENNKDIHDSSNNTE, HYSD…AKEL, and NENI…TTQT. A compositionally biased stretch (low complexity) spans 18–35; the sequence is SFETNNSTANNTNNNTDN. Positions 152–163 are enriched in basic and acidic residues; that stretch reads YSDDESSKEKQD. Composition is skewed to low complexity over residues 164-185 and 197-231; these read NINSNNNNNKNKNEQIINSENI and TTPSDTPPTLTNNTSSTTTTTTTNNTTTAATTTTN. Polar residues-rich tracts occupy residues 319–332 and 340–351; these read NENIFSSSRKSTTK and TASTTNTPIITA. A compositionally biased stretch (low complexity) spans 352 to 383; the sequence is QQNTTPLSPTQTTTTTTTPTTTTAQQNTPAQT. The segment covering 384–395 has biased composition (polar residues); sequence ESKPPTTISINI. Low complexity-rich tracts occupy residues 396–407 and 417–433; these read KGSKSPKTTGGK and VVISQPVVPSTPVVATT. Residues 443 to 454 show a composition bias toward polar residues; it reads STANNNSETTQT. The stretch at 479 to 506 forms a coiled coil; it reads SDSATIQQLQQSISMLEDKIRLISSNNK. Disordered stretches follow at residues 543 to 565 and 580 to 730; these read FTKSSTLAPPSSERKYSNLYSDD and IPIP…RMGK. Composition is skewed to low complexity over residues 604–653 and 660–686; these read NTST…PPQQ and TQQENTSSTTTTTTTTTTTTNTEDTTT. The region spanning 735-841 is the Bromo domain; the sequence is VVLTPVFKRC…DVFEKGFPKV (107 aa). Residues 851–903 adopt a coiled-coil conformation; sequence KNVDQEKIEKLSNDLKNVTKELEKFKKDDSNSINNNNNNNNNYNNNNNNNNNN. Disordered regions lie at residues 874 to 969, 1039 to 1167, 1184 to 1452, and 1480 to 1544; these read KFKK…KVTT, HALP…NNNN, SIPE…TDSA, and EREE…KGNM. 3 stretches are compositionally biased toward low complexity: residues 881–911, 918–961, and 1047–1061; these read NSINNNNNNNNNYNNNNNNNNNNSSSSSSRS, SSGS…SSNN, and SSTHSSHSSSHDSSS. The region spanning 957 to 1039 is the NET domain; the sequence is SSSNNKKYPK…QYKNGEIPQH (83 aa). The span at 1064–1077 shows a compositional bias: basic and acidic residues; that stretch reads REIEKLQKQLDRLG. Over residues 1092-1107 the composition is skewed to basic residues; the sequence is HSKRISKPISKARGRK. Residues 1112 to 1167 are compositionally biased toward low complexity; the sequence is SSSNLNNSSNNINNNNNNINNYNNNNNYNNNNNNNLNNNNNNNINSNLNNNLNNNN. Residues 1113-1150 are a coiled coil; the sequence is SSNLNNSSNNINNNNNNINNYNNNNNYNNNNNNNLNNN. A compositionally biased stretch (acidic residues) spans 1192–1204; that stretch reads TDISESSDSESDS. Low complexity-rich tracts occupy residues 1205 to 1218 and 1231 to 1334; these read ESGSSDSSSSYSDS and YNNS…SLTN. Positions 1280–1308 form a coiled coil; that stretch reads NSNNNNSNNNNNNVNNNNNNHNNNNHNNN. Positions 1356–1369 are enriched in polar residues; that stretch reads SVASWSFDPTNNKE. A compositionally biased stretch (low complexity) spans 1370-1386; that stretch reads SSSSSSTSSTSSTSNTT. Polar residues predominate over residues 1387–1399; the sequence is LTPIIQQSSLTHA. Composition is skewed to low complexity over residues 1400-1424 and 1432-1451; these read SSPISSSTFVSFSSSSSTPPTNNLS and NSPSINSPSSPSANNNNTDS. Positions 1462–1544 form a coiled coil; the sequence is TLKQKEKERV…EKLNNSKGNM (83 aa). Over residues 1480–1538 the composition is skewed to basic and acidic residues; the sequence is EREEKEEELKKEEEKKRIEMEEIKRLAKEKEEREAEETRKQIESERAAAREAREKEKLN.

The chain is Bromodomain-containing protein DDB_G0270170 from Dictyostelium discoideum (Social amoeba).